The chain runs to 904 residues: Disintegrin and metalloproteinase domain-containing protein 22 (904 aa).

A signal peptide spans 1–23 (MQAAAAASFWLLCVLGTCPLARC). Positions 24-223 (GRAGVASLKG…LKPRLKRRKR (200 aa)) are excised as a propeptide. At 24-734 (GRAGVASLKG…LSGNGVAGTN (711 aa)) the chain is on the extracellular side. An N-linked (GlcNAc...) asparagine glycan is attached at N163. A Peptidase M12B domain is found at 237–436 (KYIELMIVND…GGGACLFNKP (200 aa)). Intrachain disulfides connect C347/C431, C390/C415, C392/C399, C445/C475, C456/C472, C458/C464, C471/C492, C483/C489, C488/C514, C501/C521, C508/C540, C533/C545, C552/C603, C567/C633, C581/C591, C598/C661, and C655/C666. Positions 442–529 (PPECGNGFIE…QCAPNVHKMD (88 aa)) constitute a Disintegrin domain. A glycan (N-linked (GlcNAc...) asparagine) is linked at N517. The N-linked (GlcNAc...) asparagine glycan is linked to N632. An N-linked (GlcNAc...) asparagine glycan is attached at N673. The EGF-like domain maps to 673-710 (NFSTCSSSKAGTVCSGNGVCSNELKCVCNRHWTGADCG). 3 disulfide bridges follow: C677/C692, C686/C698, and C700/C709. The chain crosses the membrane as a helical span at residues 735–755 (IIIGIIAGTILVLALILGITA). Residues 756–857 (WGYKNYREQR…RFRPRSNSTE (102 aa)) are Cytoplasmic-facing. The disordered stretch occupies residues 769–904 (QGDYVKKPGD…QSARLWETSI (136 aa)). Positions 789-808 (GGSTNSASSSKKRSNGLSHS) are enriched in low complexity. Phosphoserine is present on residues S808, K817, and S832. The segment covering 809-827 (WSERIPDTKHISDICENGR) has biased composition (basic and acidic residues). The span at 840–851 (NKKKIRGKRFRP) shows a compositional bias: basic residues. Phosphoserine is present on residues S855, S860, S864, S868, and M882. Over residues 860–875 (SPAKSPSSSTGSIASS) the composition is skewed to low complexity.

In terms of assembly, interacts with LGI1. Can bind to LGI4. Interacts with KCNA2, DLG2 and DLG4. Interacts with ADAM11. Interacts (via C-terminus) with YWHAB/14-3-3 beta. Interacts (via C-terminus) with YWHAZ/14-3-3 zeta. Post-translationally, the precursor is cleaved by a furin endopeptidase. Detected in juxtaparanodal zones in the central nervous system and at nerve terminal plexuses of basket cells in the cerebellum (at protein level). Expressed at high levels in the brain. Strongly expressed in cerebellar granule cells and hippocampus. In spinal cord, expression is restricted to gray matter.

The protein localises to the cell membrane. The protein resides in the cell projection. Its subcellular location is the axon. Its function is as follows. Probable ligand for integrin in the brain. This is a non catalytic metalloprotease-like protein. Involved in regulation of cell adhesion and spreading and in inhibition of cell proliferation. Neuronal receptor for LGI1. In Mus musculus (Mouse), this protein is Disintegrin and metalloproteinase domain-containing protein 22 (Adam22).